A 218-amino-acid polypeptide reads, in one-letter code: ATP phosphoribosyltransferase (218 aa).

This sequence belongs to the ATP phosphoribosyltransferase family. Short subfamily. Heteromultimer composed of HisG and HisZ subunits.

It localises to the cytoplasm. The enzyme catalyses 1-(5-phospho-beta-D-ribosyl)-ATP + diphosphate = 5-phospho-alpha-D-ribose 1-diphosphate + ATP. It participates in amino-acid biosynthesis; L-histidine biosynthesis; L-histidine from 5-phospho-alpha-D-ribose 1-diphosphate: step 1/9. In terms of biological role, catalyzes the condensation of ATP and 5-phosphoribose 1-diphosphate to form N'-(5'-phosphoribosyl)-ATP (PR-ATP). Has a crucial role in the pathway because the rate of histidine biosynthesis seems to be controlled primarily by regulation of HisG enzymatic activity. The chain is ATP phosphoribosyltransferase from Trichormus variabilis (strain ATCC 29413 / PCC 7937) (Anabaena variabilis).